We begin with the raw amino-acid sequence, 303 residues long: Acidic endochitinase WIN6.2B (303 aa).

A signal peptide spans 1–21; it reads MSVWAFAFFSLFLSLSVRGSA. In terms of domain architecture, Chitin-binding type-1 spans 22 to 62; the sequence is EQCGQQAGDALCPGGLCCSSYGWCGTTADYCGDGCQSQCDG. 4 disulfides stabilise this stretch: Cys24–Cys39, Cys33–Cys45, Cys38–Cys52, and Cys56–Cys60. The interval 82–303 is chitinase; that stretch reads DGYLSDIIPE…YGLLGLKDTM (222 aa). Glu150 (proton donor) is an active-site residue. A disulfide bond links Cys253 and Cys286.

The protein belongs to the glycosyl hydrolase 19 family. Chitinase class I subfamily.

The enzyme catalyses Random endo-hydrolysis of N-acetyl-beta-D-glucosaminide (1-&gt;4)-beta-linkages in chitin and chitodextrins.. Its function is as follows. Defense against chitin-containing fungal pathogens. The polypeptide is Acidic endochitinase WIN6.2B (Populus trichocarpa (Western balsam poplar)).